The chain runs to 102 residues: MPQPEQLPGPNADIWNWQLQGLCRGMDSSMFFHPDGERGRARTQREQRAKEMCRRCPVIEACRSHALEVGEPYGVWGGLSESERDLLLKGTMGRTRGIRRTA.

The region spanning 22 to 86 is the 4Fe-4S Wbl-type domain; the sequence is LCRGMDSSMF…GGLSESERDL (65 aa). The [4Fe-4S] cluster site is built by C23, C53, C56, and C62.

The protein belongs to the WhiB family. Homodimer. Interacts with the C-terminal 54 residues of sigma factor SigA (RpoV). The cofactor is [4Fe-4S] cluster. In terms of processing, the 4Fe-4S cluster interacts with NO, forming a protein-bound dinitrosyliron dithiol complex. Post-translationally, the 4Fe-4S cluster interacts with O(2), leading to its degradation. Cluster loss takes about 2 hours. Once in the apo-form the cysteines oxidize to form 2 intramolecular disulfide bonds.

It localises to the cytoplasm. In terms of biological role, a redox-sensitive transcriptional regulator. Maintains intracellular redox homeostasis by regulating catabolic metabolism and polyketide biosynthesis. Regulates expression of the redox buffer ergothioneine (ERG) in a carbon-source-dependent manner; loss of ERG or mycothiol (MSH, the other major redox buffer in this bacteria) leads to respiratory alterations and bioenergetic deficiencies that negatively impact virulence. In response to low external pH (like that found in host macrophage phagosomes) alters endogenous gene expression leading to acid resistance; MSH and WhiB3 are probably part of a regulatory circuit that mediates gene expression upon acid stress. Regulates pathogenic lipid synthesis, coordinating proprionate flux (and other host-derived fatty acid oxidation intermediates) into methyl-branched fatty acids (polyacyltrehalose, phthiocerol dimycocerosates, sulfolipids) and the storage lipid triacylglycerol, functioning as reductive sink. During intracellular growth M.tuberculosis uses host fatty acids as an energy source, generating large quantities of proprionate and NADH/NADPH, which are toxic and highly reducing respectively. WhiB3 is thought to help dissipate proprionate and NADH/NADPH by switching to the in vivo carbon source and via lipid anabolism. Responds to NO and O(2). Regulates expression of genes encoding modular polyketide synthases such as pks2, pks3 and fbpA. The oxidized apo-form of WhiB3 binds DNA (with 2 intramolecular disulfide bonds); holo-WhiB3 (with the 4Fe-4S cluster) binds DNA considerably less well. Discriminates poorly between specific and non-specific DNA-binding. Plays a role in virulence and nutritional stress. In its apo-form can act as a protein disulfide reductase. Functionally, may respond to mycothiol (MSH) redox potential (E-MSH) which decreases at pH 4.5 for up to 72 hours, indicative of cellular reductive stress; deletion of whiB3 leads to a lesser E-MSH at 72 hours, indicative of cellular oxidative stress. Probably via its effects on production of polyketide lipids, regulates host gene expression, leading to blockage of phagosome maturation. Equilibration of extra- and intracytoplasmic pH kills bacteria. The chain is Redox- and pH-responsive transcriptional regulator WhiB3 (whiB3) from Mycobacterium tuberculosis (strain ATCC 25618 / H37Rv).